Here is a 122-residue protein sequence, read N- to C-terminus: Large ribosomal subunit protein uL14 (122 aa).

The protein belongs to the universal ribosomal protein uL14 family. As to quaternary structure, part of the 50S ribosomal subunit. Forms a cluster with proteins L3 and L19. In the 70S ribosome, L14 and L19 interact and together make contacts with the 16S rRNA in bridges B5 and B8.

Functionally, binds to 23S rRNA. Forms part of two intersubunit bridges in the 70S ribosome. This chain is Large ribosomal subunit protein uL14, found in Lysinibacillus sphaericus (strain C3-41).